A 245-amino-acid chain; its full sequence is Leucyl/phenylalanyl-tRNA--protein transferase (245 aa).

It belongs to the L/F-transferase family.

Its subcellular location is the cytoplasm. The enzyme catalyses N-terminal L-lysyl-[protein] + L-leucyl-tRNA(Leu) = N-terminal L-leucyl-L-lysyl-[protein] + tRNA(Leu) + H(+). It catalyses the reaction N-terminal L-arginyl-[protein] + L-leucyl-tRNA(Leu) = N-terminal L-leucyl-L-arginyl-[protein] + tRNA(Leu) + H(+). The catalysed reaction is L-phenylalanyl-tRNA(Phe) + an N-terminal L-alpha-aminoacyl-[protein] = an N-terminal L-phenylalanyl-L-alpha-aminoacyl-[protein] + tRNA(Phe). Its function is as follows. Functions in the N-end rule pathway of protein degradation where it conjugates Leu, Phe and, less efficiently, Met from aminoacyl-tRNAs to the N-termini of proteins containing an N-terminal arginine or lysine. The protein is Leucyl/phenylalanyl-tRNA--protein transferase of Paraburkholderia phytofirmans (strain DSM 17436 / LMG 22146 / PsJN) (Burkholderia phytofirmans).